An 87-amino-acid chain; its full sequence is U3-theraphotoxin-Hhn1q (87 aa).

The N-terminal stretch at 1–24 is a signal peptide; the sequence is MVNMKASMFLTFAGLVLLFVVCYA. Positions 25 to 52 are excised as a propeptide; it reads SESEEKEFPKEMLSSIFAVDNDFKQEER. 3 disulfide bridges follow: Cys-54-Cys-67, Cys-61-Cys-72, and Cys-66-Cys-79.

This sequence belongs to the neurotoxin 10 (Hwtx-1) family. 51 (Hntx-8) subfamily. Hntx-8 sub-subfamily. As to expression, expressed by the venom gland.

The protein localises to the secreted. Functionally, ion channel inhibitor. This Cyriopagopus hainanus (Chinese bird spider) protein is U3-theraphotoxin-Hhn1q.